The sequence spans 407 residues: Phosphoglycerate kinase (407 aa).

Substrate contacts are provided by residues 24 to 26 (DFN), Arg40, 63 to 66 (HLGR), Arg121, and Arg154. ATP is bound by residues Lys205, Glu337, and 363–366 (GGDS).

Belongs to the phosphoglycerate kinase family. As to quaternary structure, monomer.

Its subcellular location is the cytoplasm. It carries out the reaction (2R)-3-phosphoglycerate + ATP = (2R)-3-phospho-glyceroyl phosphate + ADP. Its pathway is carbohydrate degradation; glycolysis; pyruvate from D-glyceraldehyde 3-phosphate: step 2/5. The polypeptide is Phosphoglycerate kinase (Gloeobacter violaceus (strain ATCC 29082 / PCC 7421)).